A 55-amino-acid chain; its full sequence is Large ribosomal subunit protein bL33 (55 aa).

This sequence belongs to the bacterial ribosomal protein bL33 family.

The chain is Large ribosomal subunit protein bL33 from Brucella abortus (strain S19).